The sequence spans 610 residues: Glutamine--fructose-6-phosphate aminotransferase [isomerizing] (610 aa).

Residue Cys-2 is the Nucleophile; for GATase activity of the active site. Residues 2–219 enclose the Glutamine amidotransferase type-2 domain; that stretch reads CGIVGYAGKK…SGEWGYFSQN (218 aa). SIS domains lie at 287-431 and 459-600; these read SKDV…SDEE and MSSH…PDQP. Lys-605 functions as the For Fru-6P isomerization activity in the catalytic mechanism.

As to quaternary structure, homodimer.

The protein localises to the cytoplasm. It carries out the reaction D-fructose 6-phosphate + L-glutamine = D-glucosamine 6-phosphate + L-glutamate. Functionally, catalyzes the first step in hexosamine metabolism, converting fructose-6P into glucosamine-6P using glutamine as a nitrogen source. The protein is Glutamine--fructose-6-phosphate aminotransferase [isomerizing] of Leptospira interrogans serogroup Icterohaemorrhagiae serovar copenhageni (strain Fiocruz L1-130).